Reading from the N-terminus, the 760-residue chain is Forkhead box protein M1 (760 aa).

2 disordered regions span residues 1-54 (MRTS…AESS) and 95-167 (GKES…SYAG). Low complexity-rich tracts occupy residues 43 to 54 (PAQASQEVAESS) and 110 to 124 (SSGG…PQAH). The span at 125 to 134 (SSRDSKRAEV) shows a compositional bias: basic and acidic residues. Over residues 140–149 (GPKPAAKGVP) the composition is skewed to low complexity. Residues lysine 199 and lysine 323 each participate in a glycyl lysine isopeptide (Lys-Gly) (interchain with G-Cter in SUMO2) cross-link. The fork-head DNA-binding region spans 233–325 (ERPPYSYMAM…LTLDQVFKPL (93 aa)). A disordered region spans residues 323–348 (KPLEPGSPQSPEHLESQQKRPNPELH). Position 329 is a phosphoserine (serine 329). The segment covering 334 to 348 (EHLESQQKRPNPELH) has biased composition (basic and acidic residues). A Glycyl lysine isopeptide (Lys-Gly) (interchain with G-Cter in SUMO2) cross-link involves residue lysine 354. Serine 374 is subject to Phosphoserine; by CHEK2. Residues lysine 420 and lysine 438 each participate in a glycyl lysine isopeptide (Lys-Gly) (interchain with G-Cter in SUMO2) cross-link. 3 disordered regions span residues 500–560 (SWED…PDLF), 577–635 (ESSE…LDFS), and 660–709 (PLKS…IPSL). At serine 521 the chain carries Phosphoserine. Basic and acidic residues predominate over residues 531–542 (VTKRREKREVSR). The span at 604 to 613 (PVSSTPSKSV) shows a compositional bias: polar residues. Threonine 608 carries the phosphothreonine; by CDK1 modification. Phosphothreonine is present on threonine 624. A phosphoserine; by PLK1 mark is found at serine 727 and serine 736.

Post-translationally, phosphorylated in M (mitotic) phase. Phosphorylation by the checkpoint kinase CHEK2 in response to DNA damage increases the FOXM1 protein stability probably stimulating the transcription of genes involved in DNA repair. Phosphorylated by CDK1 in late S and G2 phases, creating docking sites for the POLO box domains of PLK1. Subsequently, PLK1 binds and phosphorylates FOXM1, leading to activation of transcriptional activity and subsequent enhanced expression of key mitotic regulators. Phosphorylated by GSK3B leading to ubiquitination and proteasomal degradation. Expressed in fetal heart, brain, liver, lung, kidney and limb, but only in adult thymus. Appears to be expressed only in adult organs containing proliferating/cycling cells or in response to growth factors.

The protein resides in the nucleus. Its function is as follows. Transcription factor regulating the expression of cell cycle genes essential for DNA replication and mitosis. Plays a role in the control of cell proliferation. Also plays a role in DNA break repair, participating in the DNA damage checkpoint response. Promotes transcription of PHB2. In Mus musculus (Mouse), this protein is Forkhead box protein M1 (Foxm1).